A 310-amino-acid polypeptide reads, in one-letter code: Protein TIFY 6A (310 aa).

The 36-residue stretch at 141–176 folds into the Tify domain; the sequence is SKPLPPQLTIFYAGSVLVYQDIAPEKAQAIMLLAGN. Positions 259–284 match the Jas motif; the sequence is PQTRKASLARFLEKRKERVINVSPYY. Positions 261 to 268 match the Nuclear localization signal motif; sequence TRKASLAR.

The protein belongs to the TIFY/JAZ family. In terms of assembly, homo- and heterodimer. Interacts with MYC2, AFPH2/NINJA, TIFY10A/JAZ1, TIFY6B/JAZ3, TIFY5A/JAZ8, TIFY9/JAZ10 and TIFY3A/JAZ11. Interacts with RHD6 and RSL1. Ubiquitinated. Targeted for degradation by the SCF(COI1) E3 ubiquitin ligase-proteasome pathway during jasmonate signaling.

Its subcellular location is the nucleus. Its function is as follows. Repressor of jasmonate responses. Interacts with and suppresses RHD6 and RSL1 transcription factor activities to negatively regulate jasmonate-stimulated root hair development. The sequence is that of Protein TIFY 6A (TIFY6A) from Arabidopsis thaliana (Mouse-ear cress).